The chain runs to 393 residues: S-adenosylmethionine synthase 3 (393 aa).

A K(+)-binding site is contributed by glutamate 43. L-methionine contacts are provided by glutamate 56 and glutamine 99. ATP is bound by residues 167–169 (DGK), 235–238 (SGRF), aspartate 246, 252–253 (RK), alanine 269, lysine 273, and lysine 277. Aspartate 246 lines the L-methionine pocket. Lysine 277 serves as a coordination point for L-methionine.

This sequence belongs to the AdoMet synthase family. As to quaternary structure, homotetramer. Requires Mn(2+) as cofactor. Mg(2+) is required as a cofactor. It depends on Co(2+) as a cofactor. The cofactor is K(+).

It localises to the cytoplasm. The enzyme catalyses L-methionine + ATP + H2O = S-adenosyl-L-methionine + phosphate + diphosphate. It functions in the pathway amino-acid biosynthesis; S-adenosyl-L-methionine biosynthesis; S-adenosyl-L-methionine from L-methionine: step 1/1. In terms of biological role, catalyzes the formation of S-adenosylmethionine from methionine and ATP. The reaction comprises two steps that are both catalyzed by the same enzyme: formation of S-adenosylmethionine (AdoMet) and triphosphate, and subsequent hydrolysis of the triphosphate. This chain is S-adenosylmethionine synthase 3 (SAM3), found in Actinidia chinensis var. chinensis (Chinese soft-hair kiwi).